The sequence spans 265 residues: MTDALIRLEQVAVTLSGQSVLDNIQLSVKPGEIVTLIGPNGAGKTTLVRAVLGLLKPDSGTVWRKPKLRVGYMPQKLHVDQTLPLSVLRFLRLVPGVDRMAAESALEEVGAEKVIDSPIQGISGGEMQRVLLARALLRKPELLVLDEPVQGVDVAGQAELYGLITRLRDRHQCGVLMVSHDLHLVMSTTDQVVCLNRHVCCSGHPEHVSHDPAFVELFGKNAQSLAIYHHHHDHAHDLHGAVVNDAPATSSHTHTHVHGDHCKHG.

Residues 6–221 enclose the ABC transporter domain; that stretch reads IRLEQVAVTL…PAFVELFGKN (216 aa). Residue 38–45 coordinates ATP; it reads GPNGAGKT. A disordered region spans residues 245–265; it reads DAPATSSHTHTHVHGDHCKHG.

It belongs to the ABC transporter superfamily. Zinc importer (TC 3.A.1.15.5) family. As to quaternary structure, the complex is composed of two ATP-binding proteins (ZnuC), two transmembrane proteins (ZnuB) and a solute-binding protein (ZnuA).

Its subcellular location is the cell inner membrane. The enzyme catalyses Zn(2+)(out) + ATP(in) + H2O(in) = Zn(2+)(in) + ADP(in) + phosphate(in) + H(+)(in). Functionally, part of the ABC transporter complex ZnuABC involved in zinc import. Responsible for energy coupling to the transport system. This is Zinc import ATP-binding protein ZnuC from Pseudomonas savastanoi pv. phaseolicola (strain 1448A / Race 6) (Pseudomonas syringae pv. phaseolicola (strain 1448A / Race 6)).